The sequence spans 200 residues: MSRYRGPRLRIIRRLGELPGFTSKTTTRTSSPGQHGGSNFAKSSAYGIRLQEKQKLRFNYGITERQLLSYVKKAKRMKGSTGEVLLQLLEMRLDNVVFRLGMAPTVVAARQLISHGHIVVNDQKVTIPSYACQVKDVISVRAKNNSRKMVTEANSTATANVPSHLSWNKESLVGVVNKVIDRKDVGLQLNELLVVEYYSR.

The S4 RNA-binding domain maps to 91 to 154; that stretch reads MRLDNVVFRL…NSRKMVTEAN (64 aa).

The protein belongs to the universal ribosomal protein uS4 family. Part of the 30S ribosomal subunit. Contacts protein S5. The interaction surface between S4 and S5 is involved in control of translational fidelity.

The protein resides in the plastid. It localises to the chloroplast. Functionally, one of the primary rRNA binding proteins, it binds directly to 16S rRNA where it nucleates assembly of the body of the 30S subunit. With S5 and S12 plays an important role in translational accuracy. The polypeptide is Small ribosomal subunit protein uS4c (rps4) (Oltmannsiellopsis viridis (Marine flagellate)).